The following is a 525-amino-acid chain: Mannuronan C5-epimerase AlgG (525 aa).

Positions 1 to 29 (MNVQRKLASTQLKPVLLGVLLATSAWSQA) are cleaved as a signal peptide. PbH1 repeat units follow at residues 287 to 309 (ADDV…DPHD), 311 to 334 (SERL…IVSR), 336 to 358 (VNNS…VLDR), 360 to 382 (SEHN…TLYE), and 383 to 405 (SSNN…RMRN). H308 functions as the Proton acceptor in the catalytic mechanism.

It belongs to the D-mannuronate C5-epimerase family.

The protein localises to the periplasm. The catalysed reaction is [(1-&gt;4)-beta-D-mannuronosyl](n) = [alginate](n). It participates in glycan biosynthesis; alginate biosynthesis. Inhibited by zinc. Functionally, catalyzes the epimerization of beta-D-mannuronate to alpha-L-guluronate during the synthesis of the linear polysaccharide alginate. In addition, is part of a periplasmic protein complex that protects alginate from degradation by AlgL by channeling the newly formed alginate polymer through a scaffold that transfers the alginate polymer through the periplasmic space to the outer membrane secretin AlgE. In Azotobacter vinelandii, this protein is Mannuronan C5-epimerase AlgG.